A 329-amino-acid chain; its full sequence is Malate dehydrogenase (329 aa).

12-18 is a binding site for NAD(+); that stretch reads GAAGQIG. 2 residues coordinate substrate: Arg93 and Arg99. Residues Asn106, Gln113, and 130–132 each bind NAD(+); that span reads VGN. Residues Asn132 and Arg163 each contribute to the substrate site. His188 serves as the catalytic Proton acceptor.

It belongs to the LDH/MDH superfamily. MDH type 2 family.

The catalysed reaction is (S)-malate + NAD(+) = oxaloacetate + NADH + H(+). Catalyzes the reversible oxidation of malate to oxaloacetate. The sequence is that of Malate dehydrogenase from Frankia casuarinae (strain DSM 45818 / CECT 9043 / HFP020203 / CcI3).